The primary structure comprises 49 residues: Small ribosomal subunit protein uS19c (49 aa).

This sequence belongs to the universal ribosomal protein uS19 family.

The protein localises to the plastid. Its subcellular location is the chloroplast. In terms of biological role, protein S19 forms a complex with S13 that binds strongly to the 16S ribosomal RNA. This chain is Small ribosomal subunit protein uS19c (rps19), found in Sinapis alba (White mustard).